The following is a 210-amino-acid chain: Large ribosomal subunit protein uL3 (210 aa).

Over residues 132-144 (GPMKHGSKYHRRP) the composition is skewed to basic residues. Positions 132-152 (GPMKHGSKYHRRPGSAGAKGP) are disordered.

Belongs to the universal ribosomal protein uL3 family. Part of the 50S ribosomal subunit. Forms a cluster with proteins L14 and L19.

One of the primary rRNA binding proteins, it binds directly near the 3'-end of the 23S rRNA, where it nucleates assembly of the 50S subunit. The protein is Large ribosomal subunit protein uL3 of Heliobacterium modesticaldum (strain ATCC 51547 / Ice1).